Consider the following 253-residue polypeptide: Triosephosphate isomerase (253 aa).

A substrate-binding site is contributed by 9–11 (NWK). His-98 (electrophile) is an active-site residue. Residue Glu-170 is the Proton acceptor of the active site. Residues Gly-176, Ser-216, and 237-238 (GG) each bind substrate.

Belongs to the triosephosphate isomerase family. As to quaternary structure, homodimer.

The protein resides in the cytoplasm. The catalysed reaction is D-glyceraldehyde 3-phosphate = dihydroxyacetone phosphate. It participates in carbohydrate biosynthesis; gluconeogenesis. Its pathway is carbohydrate degradation; glycolysis; D-glyceraldehyde 3-phosphate from glycerone phosphate: step 1/1. In terms of biological role, involved in the gluconeogenesis. Catalyzes stereospecifically the conversion of dihydroxyacetone phosphate (DHAP) to D-glyceraldehyde-3-phosphate (G3P). This chain is Triosephosphate isomerase, found in Amoebophilus asiaticus (strain 5a2).